A 384-amino-acid polypeptide reads, in one-letter code: S-adenosylmethionine synthase (384 aa).

Residue His-15 participates in ATP binding. Residue Asp-17 coordinates Mg(2+). Glu-43 serves as a coordination point for K(+). Positions 56 and 99 each coordinate L-methionine. Positions 99-109 (QSPDINQGVDK) are flexible loop. ATP is bound by residues 164–166 (DAK), 230–231 (RF), Asp-239, 245–246 (RK), Ala-262, and Lys-266. Residue Asp-239 participates in L-methionine binding. Lys-270 contacts L-methionine.

This sequence belongs to the AdoMet synthase family. Homotetramer; dimer of dimers. Mg(2+) serves as cofactor. Requires K(+) as cofactor.

It localises to the cytoplasm. The enzyme catalyses L-methionine + ATP + H2O = S-adenosyl-L-methionine + phosphate + diphosphate. It participates in amino-acid biosynthesis; S-adenosyl-L-methionine biosynthesis; S-adenosyl-L-methionine from L-methionine: step 1/1. In terms of biological role, catalyzes the formation of S-adenosylmethionine (AdoMet) from methionine and ATP. The overall synthetic reaction is composed of two sequential steps, AdoMet formation and the subsequent tripolyphosphate hydrolysis which occurs prior to release of AdoMet from the enzyme. The sequence is that of S-adenosylmethionine synthase from Aliivibrio salmonicida (strain LFI1238) (Vibrio salmonicida (strain LFI1238)).